A 161-amino-acid polypeptide reads, in one-letter code: uncharacterized protein (161 aa).

The segment covering 1-16 (MPRAGRAPAEGGPAPG) has biased composition (low complexity). Disordered stretches follow at residues 1–23 (MPRA…SRCL), 50–91 (GRPV…TQSA), and 140–161 (RGPA…WRIS).

This is an uncharacterized protein from Homo sapiens (Human).